The primary structure comprises 2144 residues: MYALHLAVNAIRAGDCESAIVASANWIGDPGVQIALDKLGALSASARCHTFDLRAEGYARGEGFGAIYLKKTSLAISSGSPIRAMIRGTAMNSNGRTGGITRPSASGQEAVIREAYRNAGRLSFKDTGYFECHGTGTYVGDPIEVAAVGRVFASDRNDSAPLLVGSVKSNVGHSEGASALAAVMKVVLALENGAIPPIYDLQTRNPNIDFEGARVLPVTEVTEWPKDRLRRASINSFGYGGANAHCIIDHVNNVLADYEAPGVYRSIDDSSRNGVQNGHLNEFAANGTTNAPSRDHRNGITDGRADGNTNGHPNANGDVGGNPINGQANGDALMIHHPPMVRIPKKMRNAITRRLVLLPLSAHNETSLDRNWAEISQVLPTFPLFDIAYTLGARRSRYPQRTFTVVNSHTPVQTQSLVLDRKPTRAPLQTATIGFVFTGQGAQWHAMGADLWDYAVFRAVIQYQDNVLACLQNAPTWSLESVLRGDCEAGLVQTAAVSQAACTAVQVGLVDLLASWSIRPAGVVGHSSGEIAAAYASGRISAAEAIVAAYLRGQAVSLNGREGAMLAVGLGPEQVAEYVQEREAEVKVAAINSPGSVTLSGDVSAIDQLAATLTAEGIFNRKLHTGGNAYHSHHMMAIGNAYMAMLRDADGHMHAHRGDRYPHVSWVSSVTPTKSTPTSSTDGTDVVDLGPYWRSNLESRVRFAEAISRLVESIPVSVLVEIGPHPALKSPVEQILKSVGKTAGYVGTLKRNEDGQQSLLQLAGTLFTLNAVVDLAAVNAVDTADGSGSECGATCTSLPRYQYTYGGLNYHESRHSKEYRHRMELRHDLLGSKVVGTARLRPQWRNILRIKDVPWLGHHRLVPDAILPGAAYMAMAVEAVGHIYRGGVEAHVTVTGFELSDVTIDRSLVVPEDDYGVEVLTSLELTFDFFDVLTTATFSISSVGRDTGEWVQHCTGCVKLIIKSSNVDDISHTIQVPETLRPVDVRAWYTPTGRFQKVGLGYGPAFQPLTDVSSDGNHLAVASVALHTPSEHGAVKGGESDYPLHPAALDGAIQLGLIACHGGRPSEVTAAFVPVHLSRMYLSNDINDATAYGDAPTVVACGERRGIRSAHLDIDMRSPNGKVLLRVERLRCVSYSRISSDSTDRAFSSPFTRLVWRPDIRTISNAQARHRYPAPQGKQSSAWAVTNKLGHFVVQSIYETFGKLADGNRPHPSGDVGHFFAWIQKKGQHDQSPSMLEARKLACENRLLESIDELVKQAFHVLEVQIAKLLHDKMSDILFERRTGIDVIIGEGLLTPLYQSGLLMTGIYPQLHRIISGLAHADPNARILEIGGGTGGATRIAMNALNGPNGIKAYRDYTFTDISAGFLSGARELLGHLPDMKFSVFDIERDPVEQGYDEQTYNLIIACQVLHATSNMHRTLTNCRRLLKPGGRLVLLETNENFIVPGVVVGTFTGYWAGIPDGRVDAPFQSLDSWDRSLRAAGFSGLDVVLDDFPEPQNTTSVMLSTVPIHIPEKDVSGTLVHVLHSTPEVPRLVPKVVEGFEERGITATISSLGNGPVQLPPASHAVIFYDEQDLLANSSEKSLGVFQHLSENSATLLVLTSCGTVNGLNPDGALIPGLLRVLRNENPATEYGSIDIDATHFNVDSSEEQEIARRIVDCELDLRRSVLPEELESTPPDREFVWQKGCMWVSRHVPDAGFHSEHGLDNKSMKPELLPLSSQGAVRAVFESPGVPNSLCFASYEEMKEPLQPDYIDVEVAAIGLNSQDIDHWTGRVNANHLSSEYAGVVTAVGTNVYNLKVGDRVYGLGKGQFGNWTRGPSVLAQKLQPEDKMIQMASMPLAYTTATYVLEQIARLRKGQSVLIQSGAKDIGLAILNLAKTKEAVVFAIVETPEQVDFLTAKMGMPASRIISTIPTLAVLRRAAQGTCNGKFDVIVSTVSGEAQQSFPSMLSHLGHWIDMSQNEPQTLSTVNGRLLLHNASYCFVDPTAIFDTSPVLAAEIKQTVDKHYRKGLIGPIPRIEESDVSQIGSSLGNLANMIGKLVVSFENPESLVRMVPSPPSVRFDPKSFYVITGVLGGLGQSLVQWMASRGARHLALLSRRHVSSVPEAEKFITSLSNRGINVSCLVCDVSDAAQVNKVIKDLSSH.

Residues Met-1 to His-250 form the Ketosynthase family 3 (KS3) domain. The tract at residues Gln-276 to Asn-325 is disordered. Residues Ser-293–Ala-305 show a composition bias toward basic and acidic residues. The tract at residues Phe-435–Ser-738 is malonyl-CoA:ACP transacylase (MAT). The interval His-827–Ser-965 is N-terminal hotdog fold. The segment at His-827–Arg-1137 is dehydratase (DH) domain. The PKS/mFAS DH domain maps to His-827–Asp-1141. The active-site Proton acceptor; for dehydratase activity is the His-859. Residues Thr-979–Asp-1141 are C-terminal hotdog fold. The active-site Proton donor; for dehydratase activity is Asp-1050. Residues Thr-1305–Pro-1494 form a methyltransferase (MT) domain region. The enoyl reductase (ER) domain stretch occupies residues Gly-1731 to Val-2042.

In terms of biological role, polyketide synthase-like protein that lacks important domains such as carrier domain and does probably not function as a polyketide synthase. The protein is Polyketide synthase-like protein Preu9 of Preussia isomera (Coprophilous fungus).